We begin with the raw amino-acid sequence, 674 residues long: Fidgetin-like protein 1 (674 aa).

Residues 157–179 (SQESDSLPNSAHDRDRTQDFPES) form a disordered region. Residues 167 to 179 (AHDRDRTQDFPES) show a composition bias toward basic and acidic residues. Lysine 225 participates in a covalent cross-link: Glycyl lysine isopeptide (Lys-Gly) (interchain with G-Cter in SUMO2). Serine 259 carries the post-translational modification Phosphoserine. The interval 295–344 (FKTAKEQLWVDQQKKYHQPQRASGSSYGGVKKSLGASRSRGILGKFVPPI) is necessary and sufficient for interaction with RAD51. The residue at position 339 (lysine 339) is an N6-acetyllysine. Residues alanine 404 and 444 to 449 (GTGKTL) contribute to the ATP site.

It belongs to the AAA ATPase family. In terms of assembly, hexamer. Interacts (via N-terminal one-half region) with RAD51; the interaction is direct. Interacts (via N-terminal one-half region) with SPIDR (via the C-terminal region); the interaction is direct. Interacts with FIRRM; may regulate homologous recombination. Mg(2+) serves as cofactor.

It localises to the nucleus. The protein resides in the cytoplasm. Its subcellular location is the perinuclear region. It catalyses the reaction ATP + H2O = ADP + phosphate + H(+). Involved in DNA double-strand break (DBS) repair via homologous recombination (HR). Recruited at DSB sites independently of BRCA2, RAD51 and RAD51 paralogs in a H2AX-dependent manner. May regulate osteoblast proliferation and differentiation. May play a role in the control of male meiosis dynamic. The polypeptide is Fidgetin-like protein 1 (FIGNL1) (Homo sapiens (Human)).